A 511-amino-acid chain; its full sequence is 2-isopropylmalate synthase (511 aa).

The Pyruvate carboxyltransferase domain maps to 5 to 267 (LIIFDTTLRD…DTDINATHIL (263 aa)). Residues aspartate 14, histidine 202, histidine 204, and asparagine 238 each coordinate Mn(2+). The tract at residues 392 to 511 (KLVSLKVCTE…ATNKAQHPQI (120 aa)) is regulatory domain.

The protein belongs to the alpha-IPM synthase/homocitrate synthase family. LeuA type 1 subfamily. In terms of assembly, homodimer. It depends on Mn(2+) as a cofactor.

The protein localises to the cytoplasm. It catalyses the reaction 3-methyl-2-oxobutanoate + acetyl-CoA + H2O = (2S)-2-isopropylmalate + CoA + H(+). It functions in the pathway amino-acid biosynthesis; L-leucine biosynthesis; L-leucine from 3-methyl-2-oxobutanoate: step 1/4. Catalyzes the condensation of the acetyl group of acetyl-CoA with 3-methyl-2-oxobutanoate (2-ketoisovalerate) to form 3-carboxy-3-hydroxy-4-methylpentanoate (2-isopropylmalate). This chain is 2-isopropylmalate synthase, found in Ruthia magnifica subsp. Calyptogena magnifica.